Consider the following 126-residue polypeptide: Holo-[acyl-carrier-protein] synthase (126 aa).

Asp-9 and Glu-58 together coordinate Mg(2+).

Belongs to the P-Pant transferase superfamily. AcpS family. The cofactor is Mg(2+).

It is found in the cytoplasm. The catalysed reaction is apo-[ACP] + CoA = holo-[ACP] + adenosine 3',5'-bisphosphate + H(+). Its function is as follows. Transfers the 4'-phosphopantetheine moiety from coenzyme A to a Ser of acyl-carrier-protein. In Salmonella choleraesuis (strain SC-B67), this protein is Holo-[acyl-carrier-protein] synthase.